A 178-amino-acid polypeptide reads, in one-letter code: FXYD domain-containing ion transport regulator 5 (178 aa).

A signal peptide spans 1–21; the sequence is MSPSGRLCLLTIVGLILPTRG. Residues 22 to 145 lie on the Extracellular side of the membrane; the sequence is QTLKDTTSSS…FYDEHTLRKR (124 aa). The interval 23–131 is disordered; the sequence is TLKDTTSSSS…QTLKPSGFHE (109 aa). Low complexity-rich tracts occupy residues 26 to 36 and 68 to 77; these read DTTSSSSADST and TPQPQTQTQQ. Positions 103-125 are enriched in polar residues; the sequence is DTTTLSERPSPSTDVQTDPQTLK. Residues 146-164 traverse the membrane as a helical segment; the sequence is GLLVAAVLFITGIIILTSG. Topologically, residues 165-178 are cytoplasmic; sequence KCRQLSRLCRNRCR.

It belongs to the FXYD family. Regulatory subunit of the sodium/potassium-transporting ATPase which is composed of a catalytic alpha subunit, a non-catalytic beta subunit and an additional regulatory subunit. The regulatory subunit, a member of the FXYD protein family, modulates the enzymatic activity in a tissue- and isoform-specific way by changing affinities of the Na+/K+-ATPase toward Na(+), K(+) or ATP. Post-translationally, glycosylated.

The protein resides in the cell membrane. The protein localises to the basolateral cell membrane. Functionally, associates with and regulates the activity of the sodium/potassium-transporting ATPase (NKA) which catalyzes the hydrolysis of ATP coupled with the exchange of Na(+) and K(+) ions across the plasma membrane. May increase NKA activity by increasing the apparent affinity for Na(+). Involved in down-regulation of E-cadherin which results in reduced cell adhesion. Promotes metastasis. The polypeptide is FXYD domain-containing ion transport regulator 5 (FXYD5) (Homo sapiens (Human)).